Reading from the N-terminus, the 184-residue chain is MDSIFKDAEQKMKKALSSLKSELASLRAGRANPSILEGINVDYYGMATPLNQLANISAPEPRLLVVQPYDKSAIEDIEKAILKSDVGLTPNNDGQVIRLAVPQLTEERRNELVKIVRQKGEDTKVVVRNVRRDANDELKKLEKEKEISEDESIRGQDEIQKITDKYIKKIDEVMNAKEEEITSF.

This sequence belongs to the RRF family.

It is found in the cytoplasm. Its function is as follows. Responsible for the release of ribosomes from messenger RNA at the termination of protein biosynthesis. May increase the efficiency of translation by recycling ribosomes from one round of translation to another. In Natranaerobius thermophilus (strain ATCC BAA-1301 / DSM 18059 / JW/NM-WN-LF), this protein is Ribosome-recycling factor.